The sequence spans 284 residues: L-fucose dehydrogenase (284 aa).

NAD(+)-binding residues include R19, I21, D40, K41, D62, V63, N89, Y154, K158, I187, T189, and L191.

This sequence belongs to the short-chain dehydrogenases/reductases (SDR) family.

The catalysed reaction is L-fucose + NAD(+) = L-fucono-1,5-lactone + NADH + H(+). It carries out the reaction D-arabinose + NAD(+) = D-arabinono-1,5-lactone + NADH + H(+). The enzyme catalyses L-galactose + NAD(+) = L-galactono-1,5-lactone + NADH + H(+). Its pathway is carbohydrate degradation; L-fucose degradation. Functionally, catalyzes the NAD(+)-dependent oxidation of L-fucose, yielding L-fucono-1,5-lactone, which rapidly converts spontaneously to L-fucone-1,4-lactone. Can also act on D-arabinose and L-galactose, with lower catalytic efficiency. Does not use NADPH. May be the initial enzyme of the putative L-fucose degradation pathway in mammals. The polypeptide is L-fucose dehydrogenase (HSD17B14) (Oryctolagus cuniculus (Rabbit)).